We begin with the raw amino-acid sequence, 224 residues long: MNEKKAVILLSGGLDSATVVAMARDEGYACYTMSFDYGQRHRAELQAAERVAKQLAVVEHKVIGLNLNGIGGSALTDTSIDVPEAPSEGIPVTYVPARNTVFLSLALGWAEVLGARDIFIGVNAVDYSGYPDCRPEFVAAFERMANLATKAGVEGQGFRIQAPLQNLSKAQIVRKGSRLGVDYAMTVSCYQADDDGRACGKCDSCRLRSAGFAEAGLADPTRYF.

10–20 contributes to the ATP binding site; that stretch reads LSGGLDSATVV. Zn(2+) is bound by residues cysteine 189, cysteine 199, cysteine 202, and cysteine 205.

Belongs to the QueC family. The cofactor is Zn(2+).

It carries out the reaction 7-carboxy-7-deazaguanine + NH4(+) + ATP = 7-cyano-7-deazaguanine + ADP + phosphate + H2O + H(+). It participates in purine metabolism; 7-cyano-7-deazaguanine biosynthesis. Catalyzes the ATP-dependent conversion of 7-carboxy-7-deazaguanine (CDG) to 7-cyano-7-deazaguanine (preQ(0)). The chain is 7-cyano-7-deazaguanine synthase from Stutzerimonas stutzeri (strain A1501) (Pseudomonas stutzeri).